The sequence spans 188 residues: NADH-quinone oxidoreductase subunit I 2 (188 aa).

4Fe-4S ferredoxin-type domains are found at residues 56–88 (HFLK…VVPY) and 98–127 (AKFE…LGQQ). Residues Cys68, Cys71, Cys74, Cys78, Cys107, Cys110, Cys113, and Cys117 each contribute to the [4Fe-4S] cluster site.

It belongs to the complex I 23 kDa subunit family. NDH-1 is composed of 14 different subunits. Subunits NuoA, H, J, K, L, M, N constitute the membrane sector of the complex. [4Fe-4S] cluster is required as a cofactor.

Its subcellular location is the cell inner membrane. It carries out the reaction a quinone + NADH + 5 H(+)(in) = a quinol + NAD(+) + 4 H(+)(out). NDH-1 shuttles electrons from NADH, via FMN and iron-sulfur (Fe-S) centers, to quinones in the respiratory chain. The immediate electron acceptor for the enzyme in this species is believed to be ubiquinone. Couples the redox reaction to proton translocation (for every two electrons transferred, four hydrogen ions are translocated across the cytoplasmic membrane), and thus conserves the redox energy in a proton gradient. The chain is NADH-quinone oxidoreductase subunit I 2 from Rhizobium meliloti (strain 1021) (Ensifer meliloti).